We begin with the raw amino-acid sequence, 518 residues long: Motile sperm domain-containing protein 2 (518 aa).

Residues 1–496 are Cytoplasmic-facing; that stretch reads MAENNAQNKA…QLQRSIWFQQ (496 aa). Residues 85–239 form the CRAL-TRIO domain; that stretch reads IPRWLLELGG…HMGGTDPFKY (155 aa). The interval 252–312 is disordered; that stretch reads PLCENGPIAS…KDENEKVDSK (61 aa). Composition is skewed to basic and acidic residues over residues 265–279 and 300–312; these read TSSKEDIEGDGKETL and VSKKDENEKVDSK. One can recognise an MSP domain in the interval 327–445; sequence LLHISPAEEL…MEHRLRCHTV (119 aa). The required for FFAT motif binding and phosphorylated FFAT motif binding stretch occupies residues 365 to 366; the sequence is RT. Residues 497 to 518 form a helical; Anchor for type IV membrane protein membrane-spanning segment; it reads LLLALTMVLLDFVVSFFYSLYN.

Homooligomer. Interacts (via MSP domain) with STARD3NL (via FFAT motif), RMDN3 (via FFAT motif), OSBPL1A (via FFAT motif) and CERT1 (via FFAT motif). Interacts (via MSP domain) with STARD3 (via phosphorylated FFAT motif); this interaction depends on the critical phosphorylation of STARD3 on 'Ser-209'. Interacts with RB1CC1 (via phosphorylated FFAT motif), MIGA2 (via phosphorylated FFAT motif) and OSBPL1A (via FFAT motif).

It is found in the endoplasmic reticulum membrane. In terms of biological role, endoplasmic reticulum-anchored protein that mediates the formation of contact sites between the endoplasmic (ER) and endosomes, mitochondria or Golgi through interaction with conventional- and phosphorylated-FFAT-containing organelle-bound proteins. In addition, forms endoplasmic reticulum (ER)-lipid droplets (LDs) contacts through a direct protein-membrane interaction and participates in LDs homeostasis. The attachment mechanism involves an amphipathic helix that has an affinity for lipid packing defects present at the surface of LDs. Promotes migration of primary monocytes and neutrophils, in response to various chemokines. The protein is Motile sperm domain-containing protein 2 of Mus musculus (Mouse).